An 894-amino-acid polypeptide reads, in one-letter code: Pentatricopeptide repeat-containing protein At1g19720 (894 aa).

18 PPR repeats span residues 80 to 110 (KRST…FGLF), 114 to 144 (DVFV…MRER), 145 to 179 (NLFT…GVLP), 180 to 214 (DDFL…GMSS), 215 to 245 (CLRV…MRER), 246 to 280 (DVIA…GISP), 281 to 315 (GLVT…GITA), 316 to 350 (DVFT…GVVP), 351 to 385 (NAVT…GFID), 386 to 416 (DVLV…VKNK), 417 to 451 (DVYT…NLRP), 452 to 486 (NIIT…GKVQ), 488 to 522 (NTAT…RFMP), 523 to 557 (NSVT…NLDA), 558 to 588 (IHAV…METK), 589 to 623 (DIIT…GITP), 624 to 659 (NRGT…HIIP), and 660 to 694 (ALEH…SETP). Residues 695–770 (IWESFLTGCR…PLGQSWIEVR (76 aa)) are type E motif. Residues 771-801 (NLIHTFTTGDQSKLCTDVLYPLVEKMSRLDN) are type E(+) motif. The type DYW motif stretch occupies residues 803 to 894 (SDQYNGELWI…NGDCSCKDYW (92 aa)).

It belongs to the PPR family. PCMP-H subfamily.

In Arabidopsis thaliana (Mouse-ear cress), this protein is Pentatricopeptide repeat-containing protein At1g19720 (DYW7).